Here is a 415-residue protein sequence, read N- to C-terminus: Arrestin red cell isoform 3 (415 aa).

It belongs to the arrestin family.

Its subcellular location is the cytoplasm. This chain is Arrestin red cell isoform 3, found in Oncorhynchus mykiss (Rainbow trout).